The primary structure comprises 368 residues: tRNA/tmRNA (uracil-C(5))-methyltransferase (368 aa).

S-adenosyl-L-methionine contacts are provided by glutamine 192, tyrosine 220, asparagine 225, glutamate 241, and aspartate 301. Cysteine 326 (nucleophile) is an active-site residue. Residue glutamate 360 is the Proton acceptor of the active site.

It belongs to the class I-like SAM-binding methyltransferase superfamily. RNA M5U methyltransferase family. TrmA subfamily.

The catalysed reaction is uridine(54) in tRNA + S-adenosyl-L-methionine = 5-methyluridine(54) in tRNA + S-adenosyl-L-homocysteine + H(+). It carries out the reaction uridine(341) in tmRNA + S-adenosyl-L-methionine = 5-methyluridine(341) in tmRNA + S-adenosyl-L-homocysteine + H(+). In terms of biological role, dual-specificity methyltransferase that catalyzes the formation of 5-methyluridine at position 54 (m5U54) in all tRNAs, and that of position 341 (m5U341) in tmRNA (transfer-mRNA). The protein is tRNA/tmRNA (uracil-C(5))-methyltransferase of Actinobacillus pleuropneumoniae serotype 7 (strain AP76).